The primary structure comprises 1365 residues: DNA-directed RNA polymerase subunit beta'' (1365 aa).

Zn(2+)-binding residues include C224, C295, C302, and C305.

This sequence belongs to the RNA polymerase beta' chain family. RpoC2 subfamily. In terms of assembly, in plastids the minimal PEP RNA polymerase catalytic core is composed of four subunits: alpha, beta, beta', and beta''. When a (nuclear-encoded) sigma factor is associated with the core the holoenzyme is formed, which can initiate transcription. Requires Zn(2+) as cofactor.

It localises to the plastid. It is found in the chloroplast. It carries out the reaction RNA(n) + a ribonucleoside 5'-triphosphate = RNA(n+1) + diphosphate. In terms of biological role, DNA-dependent RNA polymerase catalyzes the transcription of DNA into RNA using the four ribonucleoside triphosphates as substrates. This Fagopyrum esculentum subsp. ancestrale (Wild buckwheat) protein is DNA-directed RNA polymerase subunit beta''.